Here is an 864-residue protein sequence, read N- to C-terminus: Leucine--tRNA ligase (864 aa).

Positions 42–52 (PYPSGKLHMGH) match the 'HIGH' region motif. The 'KMSKS' region signature appears at 624–628 (KMSKS). Residue lysine 627 coordinates ATP.

Belongs to the class-I aminoacyl-tRNA synthetase family.

Its subcellular location is the cytoplasm. The enzyme catalyses tRNA(Leu) + L-leucine + ATP = L-leucyl-tRNA(Leu) + AMP + diphosphate. This chain is Leucine--tRNA ligase, found in Burkholderia pseudomallei (strain 668).